Reading from the N-terminus, the 408-residue chain is RUN domain-containing protein 3B (408 aa).

The disordered stretch occupies residues 1 to 25 (MASRSLGGLSGSRGGGGGGGGKKSL). A compositionally biased stretch (gly residues) spans 8-22 (GLSGSRGGGGGGGGK). Position 13 is an omega-N-methylarginine (arginine 13). Residues 58–190 (DDSSPEFNNF…IDFSFCLKGE (133 aa)) enclose the RUN domain. The segment at 213-238 (DSISSDEEELRTFGSSDSESSTPENV) is disordered. Phosphoserine occurs at positions 216 and 217. Positions 225–236 (FGSSDSESSTPE) are enriched in polar residues. A coiled-coil region spans residues 301 to 326 (AHKLEKEQLEYIIVELQDQLKSYQSL). Residues 337–359 (QASLDPSHSQEGDGKQDSLNFIG) are disordered.

This sequence belongs to the RUNDC3 family. Interacts with RAP2A.

The protein is RUN domain-containing protein 3B (Rundc3b) of Mus musculus (Mouse).